A 409-amino-acid chain; its full sequence is Arginine deiminase (409 aa).

Cysteine 399 (amidino-cysteine intermediate) is an active-site residue.

The protein belongs to the arginine deiminase family.

It is found in the cytoplasm. It catalyses the reaction L-arginine + H2O = L-citrulline + NH4(+). Its pathway is amino-acid degradation; L-arginine degradation via ADI pathway; carbamoyl phosphate from L-arginine: step 1/2. In Borreliella afzelii (Borrelia afzelii), this protein is Arginine deiminase (arcA).